Reading from the N-terminus, the 418-residue chain is Putative O-antigen transporter (418 aa).

11 consecutive transmembrane segments (helical) span residues 8-28 (VWNL…LGFL), 37-57 (FGVY…DVGL), 85-105 (FLVL…DGIV), 124-144 (LLAI…ILEG), 165-185 (IPAI…GLIF), 217-237 (LFFF…MVYF), 251-271 (VAFY…PAAI), 297-317 (LLMF…SGLV), 334-354 (LNVL…FSAI), 362-382 (ITAL…YFMV), and 385-405 (YGLL…ALLL).

This sequence belongs to the polysaccharide synthase family.

It localises to the cell inner membrane. It participates in bacterial outer membrane biogenesis; lipopolysaccharide biosynthesis. Could be an O-antigen transporter. This chain is Putative O-antigen transporter (rfbE), found in Shigella flexneri.